A 214-amino-acid polypeptide reads, in one-letter code: Probable transaldolase (214 aa).

The Schiff-base intermediate with substrate role is filled by K83.

Belongs to the transaldolase family. Type 3B subfamily.

The protein resides in the cytoplasm. The catalysed reaction is D-sedoheptulose 7-phosphate + D-glyceraldehyde 3-phosphate = D-erythrose 4-phosphate + beta-D-fructose 6-phosphate. It participates in carbohydrate degradation; pentose phosphate pathway; D-glyceraldehyde 3-phosphate and beta-D-fructose 6-phosphate from D-ribose 5-phosphate and D-xylulose 5-phosphate (non-oxidative stage): step 2/3. In terms of biological role, transaldolase is important for the balance of metabolites in the pentose-phosphate pathway. This is Probable transaldolase from Desulfatibacillum aliphaticivorans.